We begin with the raw amino-acid sequence, 51 residues long: MAAKKSFIIKQKLAKAKNQNRPLPQWYRLKTNNKIRYNAKRRHWRRTKLGL.

It belongs to the eukaryotic ribosomal protein eL39 family. Interacts with YIH1.

The protein is Large ribosomal subunit protein eL39 (RPL39) of Kluyveromyces lactis (strain ATCC 8585 / CBS 2359 / DSM 70799 / NBRC 1267 / NRRL Y-1140 / WM37) (Yeast).